Here is a 363-residue protein sequence, read N- to C-terminus: Histidinol-phosphate aminotransferase (363 aa).

At K218 the chain carries N6-(pyridoxal phosphate)lysine.

Belongs to the class-II pyridoxal-phosphate-dependent aminotransferase family. Histidinol-phosphate aminotransferase subfamily. As to quaternary structure, homodimer. The cofactor is pyridoxal 5'-phosphate.

The enzyme catalyses L-histidinol phosphate + 2-oxoglutarate = 3-(imidazol-4-yl)-2-oxopropyl phosphate + L-glutamate. Its pathway is amino-acid biosynthesis; L-histidine biosynthesis; L-histidine from 5-phospho-alpha-D-ribose 1-diphosphate: step 7/9. In Xanthomonas euvesicatoria pv. vesicatoria (strain 85-10) (Xanthomonas campestris pv. vesicatoria), this protein is Histidinol-phosphate aminotransferase.